The following is a 163-amino-acid chain: Globin CTT-Z (163 aa).

The first 16 residues, 1 to 16 (MKFFAVLALCIVGAIA), serve as a signal peptide directing secretion. A Globin domain is found at 18–162 (PLTSDEAALV…VYTAVFQIVT (145 aa)). The heme b site is built by histidine 76 and histidine 111.

This sequence belongs to the globin family.

The chain is Globin CTT-Z (CTT-Z) from Chironomus thummi piger (Midge).